The following is a 98-amino-acid chain: ESAT-6-like protein EsxM (98 aa).

Belongs to the WXG100 family. CFP-10 subfamily.

The protein resides in the secreted. The protein is ESAT-6-like protein EsxM (esxM) of Mycobacterium bovis (strain ATCC BAA-935 / AF2122/97).